The primary structure comprises 205 residues: GTP cyclohydrolase-2 (205 aa).

A GTP-binding site is contributed by Arg-49–Glu-53. Zn(2+) contacts are provided by Cys-54, Cys-65, and Cys-67. Residues Gln-70, Glu-92 to Arg-94, and Thr-114 each bind GTP. Catalysis depends on Asp-126, which acts as the Proton acceptor. Catalysis depends on Arg-128, which acts as the Nucleophile. GTP is bound by residues Thr-149 and Lys-154.

Belongs to the GTP cyclohydrolase II family. Zn(2+) serves as cofactor.

It catalyses the reaction GTP + 4 H2O = 2,5-diamino-6-hydroxy-4-(5-phosphoribosylamino)-pyrimidine + formate + 2 phosphate + 3 H(+). Its pathway is cofactor biosynthesis; riboflavin biosynthesis; 5-amino-6-(D-ribitylamino)uracil from GTP: step 1/4. Functionally, catalyzes the conversion of GTP to 2,5-diamino-6-ribosylamino-4(3H)-pyrimidinone 5'-phosphate (DARP), formate and pyrophosphate. The chain is GTP cyclohydrolase-2 from Pseudomonas fluorescens (strain SBW25).